The primary structure comprises 210 residues: ATP-dependent Clp protease proteolytic subunit (210 aa).

Residue serine 107 is the Nucleophile of the active site. The active site involves histidine 132.

Belongs to the peptidase S14 family. As to quaternary structure, fourteen ClpP subunits assemble into 2 heptameric rings which stack back to back to give a disk-like structure with a central cavity, resembling the structure of eukaryotic proteasomes.

It localises to the cytoplasm. The catalysed reaction is Hydrolysis of proteins to small peptides in the presence of ATP and magnesium. alpha-casein is the usual test substrate. In the absence of ATP, only oligopeptides shorter than five residues are hydrolyzed (such as succinyl-Leu-Tyr-|-NHMec, and Leu-Tyr-Leu-|-Tyr-Trp, in which cleavage of the -Tyr-|-Leu- and -Tyr-|-Trp bonds also occurs).. In terms of biological role, cleaves peptides in various proteins in a process that requires ATP hydrolysis. Has a chymotrypsin-like activity. Plays a major role in the degradation of misfolded proteins. In Zymomonas mobilis subsp. mobilis (strain ATCC 31821 / ZM4 / CP4), this protein is ATP-dependent Clp protease proteolytic subunit.